A 71-amino-acid polypeptide reads, in one-letter code: Putative membrane protein insertion efficiency factor (71 aa).

The protein belongs to the UPF0161 family.

The protein localises to the cell membrane. Its function is as follows. Could be involved in insertion of integral membrane proteins into the membrane. This Ruminiclostridium cellulolyticum (strain ATCC 35319 / DSM 5812 / JCM 6584 / H10) (Clostridium cellulolyticum) protein is Putative membrane protein insertion efficiency factor.